The chain runs to 415 residues: Serine--tRNA ligase (415 aa).

Residue 231–233 (TAE) coordinates L-serine. 262-264 (RSE) contacts ATP. Glutamate 285 is a binding site for L-serine. 349–352 (EISS) is an ATP binding site. Serine 383 serves as a coordination point for L-serine.

Belongs to the class-II aminoacyl-tRNA synthetase family. Type-1 seryl-tRNA synthetase subfamily. Homodimer. The tRNA molecule binds across the dimer.

The protein resides in the cytoplasm. The enzyme catalyses tRNA(Ser) + L-serine + ATP = L-seryl-tRNA(Ser) + AMP + diphosphate + H(+). It carries out the reaction tRNA(Sec) + L-serine + ATP = L-seryl-tRNA(Sec) + AMP + diphosphate + H(+). Its pathway is aminoacyl-tRNA biosynthesis; selenocysteinyl-tRNA(Sec) biosynthesis; L-seryl-tRNA(Sec) from L-serine and tRNA(Sec): step 1/1. In terms of biological role, catalyzes the attachment of serine to tRNA(Ser). Is also able to aminoacylate tRNA(Sec) with serine, to form the misacylated tRNA L-seryl-tRNA(Sec), which will be further converted into selenocysteinyl-tRNA(Sec). This Helicobacter acinonychis (strain Sheeba) protein is Serine--tRNA ligase.